We begin with the raw amino-acid sequence, 212 residues long: High frequency lysogenization protein HflD homolog (212 aa).

The protein belongs to the HflD family.

Its subcellular location is the cytoplasm. It is found in the cell inner membrane. The protein is High frequency lysogenization protein HflD homolog of Stutzerimonas stutzeri (strain A1501) (Pseudomonas stutzeri).